The primary structure comprises 75 residues: U6-lycotoxin-Ls1f (75 aa).

An N-terminal signal peptide occupies residues 1–21 (MKLLLFTALVLVVISLVEVEA). A propeptide spanning residues 22-25 (ENER) is cleaved from the precursor.

Belongs to the neurotoxin 19 (CSTX) family. 06 (U6-Lctx) subfamily. Contains 4 disulfide bonds. In terms of tissue distribution, expressed by the venom gland.

It is found in the secreted. This chain is U6-lycotoxin-Ls1f, found in Lycosa singoriensis (Wolf spider).